A 435-amino-acid polypeptide reads, in one-letter code: GTPase Der (435 aa).

EngA-type G domains are found at residues 4–167 and 175–350; these read GIVA…PSHE and TRVS…TALD. GTP is bound by residues 10–17, 57–61, 119–122, 181–188, 228–232, and 293–296; these read GRPNVGKS, DTGGI, NKYD, DTAGI, and NKWD. Residues 351-435 form the KH-like domain; the sequence is KKIKTSVFNE…PMSIIFRERK (85 aa).

The protein belongs to the TRAFAC class TrmE-Era-EngA-EngB-Septin-like GTPase superfamily. EngA (Der) GTPase family. Associates with the 50S ribosomal subunit.

GTPase that plays an essential role in the late steps of ribosome biogenesis. The polypeptide is GTPase Der (Mesoplasma florum (strain ATCC 33453 / NBRC 100688 / NCTC 11704 / L1) (Acholeplasma florum)).